The primary structure comprises 1233 residues: ATP-dependent helicase/nuclease subunit A (1233 aa).

Residues 3–474 (TKWTEEQKQA…ILLYKNFRSR (472 aa)) enclose the UvrD-like helicase ATP-binding domain. 24–31 (AAAGSGKT) contacts ATP. One can recognise a UvrD-like helicase C-terminal domain in the interval 518–809 (VTGGAVELHL…RIMSIHKSKG (292 aa)). The interval 533-555 (VEEEVEEKEEEKNEEKDFEEEEE) is disordered.

Belongs to the helicase family. AddA subfamily. Heterodimer of AddA and AddB/RexB. The cofactor is Mg(2+).

The enzyme catalyses Couples ATP hydrolysis with the unwinding of duplex DNA by translocating in the 3'-5' direction.. The catalysed reaction is ATP + H2O = ADP + phosphate + H(+). In terms of biological role, the heterodimer acts as both an ATP-dependent DNA helicase and an ATP-dependent, dual-direction single-stranded exonuclease. Recognizes the chi site generating a DNA molecule suitable for the initiation of homologous recombination. The AddA nuclease domain is required for chi fragment generation; this subunit has the helicase and 3' -&gt; 5' nuclease activities. This Thermoanaerobacter pseudethanolicus (strain ATCC 33223 / 39E) (Clostridium thermohydrosulfuricum) protein is ATP-dependent helicase/nuclease subunit A.